Here is a 273-residue protein sequence, read N- to C-terminus: Formamidopyrimidine-DNA glycosylase (273 aa).

The active-site Schiff-base intermediate with DNA is the Pro2. Catalysis depends on Glu3, which acts as the Proton donor. Residue Lys58 is the Proton donor; for beta-elimination activity of the active site. Residues His92, Arg111, and Lys153 each contribute to the DNA site. Residues 238 to 272 form an FPG-type zinc finger; sequence KVYGREGQSCLSCSSTIIKIKHSGRSTFYCKTCQY. Catalysis depends on Arg262, which acts as the Proton donor; for delta-elimination activity.

Belongs to the FPG family. Monomer. It depends on Zn(2+) as a cofactor.

The catalysed reaction is Hydrolysis of DNA containing ring-opened 7-methylguanine residues, releasing 2,6-diamino-4-hydroxy-5-(N-methyl)formamidopyrimidine.. It carries out the reaction 2'-deoxyribonucleotide-(2'-deoxyribose 5'-phosphate)-2'-deoxyribonucleotide-DNA = a 3'-end 2'-deoxyribonucleotide-(2,3-dehydro-2,3-deoxyribose 5'-phosphate)-DNA + a 5'-end 5'-phospho-2'-deoxyribonucleoside-DNA + H(+). Its function is as follows. Involved in base excision repair of DNA damaged by oxidation or by mutagenic agents. Acts as a DNA glycosylase that recognizes and removes damaged bases. Has a preference for oxidized purines, such as 7,8-dihydro-8-oxoguanine (8-oxoG). Has AP (apurinic/apyrimidinic) lyase activity and introduces nicks in the DNA strand. Cleaves the DNA backbone by beta-delta elimination to generate a single-strand break at the site of the removed base with both 3'- and 5'-phosphates. The chain is Formamidopyrimidine-DNA glycosylase from Rickettsia africae (strain ESF-5).